The primary structure comprises 594 residues: Metastasis-associated protein MTA3 (594 aa).

A BAH domain is found at M1–K147. The ELM2 domain occupies G148–G259. Residues D266 to R318 enclose the SANT domain. The GATA-type; atypical zinc finger occupies C379 to C406. S428 and S430 each carry phosphoserine. T455 is subject to Phosphothreonine. Residue S519 is modified to Phosphoserine.

It belongs to the metastasis-associated protein family. As to quaternary structure, component of the nucleosome remodeling and deacetylase (NuRD) repressor complex, composed of core proteins MTA1, MTA2, MTA3, RBBP4, RBBP7, HDAC1, HDAC2, MBD2, MBD3, and peripherally associated proteins CDK2AP1, CDK2AP2, GATAD2A, GATAD2B, CHD3, CHD4 and CHD5. The exact stoichiometry of the NuRD complex is unknown, and some subunits such as MBD2 and MBD3, GATAD2A and GATAD2B, and CHD3, CHD4 and CHD5 define mutually exclusive NuRD complexes. Interacts with BCL6. Interacts with NACC2. Interacts with PWWP2B. As to expression, expressed in germinal centers of lymphoid tissues. No expression in nonepithelial cells.

The protein resides in the nucleus. It is found in the cytoplasm. In terms of biological role, acts as a component of the histone deacetylase NuRD complex which participates in the remodeling of chromatin. Plays a role in maintenance of the normal epithelial architecture through the repression of SNAI1 transcription in a histone deacetylase-dependent manner, and thus the regulation of E-cadherin levels. Contributes to transcriptional repression by BCL6. The protein is Metastasis-associated protein MTA3 (MTA3) of Homo sapiens (Human).